The primary structure comprises 125 residues: Large ribosomal subunit protein eL31 (125 aa).

The residue at position 1 (Met1) is an N-acetylmethionine. Residue Ser15 is modified to Phosphoserine. N6-succinyllysine is present on residues Lys55 and Lys70. Position 75 is an N6-acetyllysine; alternate (Lys75). Position 75 is an N6-succinyllysine; alternate (Lys75). Ser98 carries the phosphoserine modification.

The protein belongs to the eukaryotic ribosomal protein eL31 family. In terms of assembly, component of the large ribosomal subunit.

It localises to the cytoplasm. Its function is as follows. Component of the large ribosomal subunit. The ribosome is a large ribonucleoprotein complex responsible for the synthesis of proteins in the cell. This is Large ribosomal subunit protein eL31 (RPL31) from Pongo abelii (Sumatran orangutan).